Here is a 125-residue protein sequence, read N- to C-terminus: Large ribosomal subunit protein bL20 (125 aa).

This sequence belongs to the bacterial ribosomal protein bL20 family.

Its function is as follows. Binds directly to 23S ribosomal RNA and is necessary for the in vitro assembly process of the 50S ribosomal subunit. It is not involved in the protein synthesizing functions of that subunit. This Methylobacterium nodulans (strain LMG 21967 / CNCM I-2342 / ORS 2060) protein is Large ribosomal subunit protein bL20.